Reading from the N-terminus, the 491-residue chain is Cytochrome P450 2B4 (491 aa).

Position 128 is a phosphoserine; by PKA (S128). C436 contacts heme.

The protein belongs to the cytochrome P450 family. Heme serves as cofactor.

Its subcellular location is the endoplasmic reticulum membrane. The protein localises to the microsome membrane. The enzyme catalyses an organic molecule + reduced [NADPH--hemoprotein reductase] + O2 = an alcohol + oxidized [NADPH--hemoprotein reductase] + H2O + H(+). Functionally, cytochromes P450 are a group of heme-thiolate monooxygenases. In liver microsomes, this enzyme is involved in an NADPH-dependent electron transport pathway. It oxidizes a variety of structurally unrelated compounds, including steroids, fatty acids, and xenobiotics. In the epoxidation of arachidonic acid it has a unique preference for the 5,6-olefin. This is Cytochrome P450 2B4 (CYP2B4) from Oryctolagus cuniculus (Rabbit).